Reading from the N-terminus, the 208-residue chain is 3-demethoxyubiquinol 3-hydroxylase (208 aa).

Fe cation-binding residues include Glu57, Glu87, His90, Glu139, Glu171, and His174.

The protein belongs to the COQ7 family. Fe cation serves as cofactor.

The protein localises to the cell membrane. It carries out the reaction a 5-methoxy-2-methyl-3-(all-trans-polyprenyl)benzene-1,4-diol + AH2 + O2 = a 3-demethylubiquinol + A + H2O. The protein operates within cofactor biosynthesis; ubiquinone biosynthesis. Its function is as follows. Catalyzes the hydroxylation of 2-nonaprenyl-3-methyl-6-methoxy-1,4-benzoquinol during ubiquinone biosynthesis. This is 3-demethoxyubiquinol 3-hydroxylase from Janthinobacterium sp. (strain Marseille) (Minibacterium massiliensis).